The chain runs to 351 residues: 1-acylglycerol-3-phosphate O-acyltransferase ABHD5 (351 aa).

Positions 79–184 (PLVLLHGFGG…LILVEPWGFP (106 aa)) constitute an AB hydrolase-1 domain. Residue serine 124 is modified to Phosphoserine. An HXXXXD motif motif is present at residues 329-334 (HYVYAD).

It belongs to the peptidase S33 family. ABHD4/ABHD5 subfamily. In terms of assembly, interacts with ADRP. Interacts with PLIN. Interacts with and PNPLA2. Interacts with PLIN5; promotes interaction with PNPLA2. In terms of tissue distribution, highly expressed in the adipose tissue and testes. Weakly expressed in the liver, muscle, kidney, and heart. Expressed by upper epidermal layers and dermal fibroblasts in skin, hepatocytes and hypothalamus in brain (at protein level).

It is found in the cytoplasm. The protein resides in the lipid droplet. The protein localises to the cytosol. It carries out the reaction a 1-acyl-sn-glycero-3-phosphate + an acyl-CoA = a 1,2-diacyl-sn-glycero-3-phosphate + CoA. The catalysed reaction is 1-(9Z-octadecenoyl)-sn-glycero-3-phosphate + (9Z)-octadecenoyl-CoA = 1,2-di-(9Z-octadecenoyl)-sn-glycero-3-phosphate + CoA. It catalyses the reaction 1-(9Z-octadecenoyl)-sn-glycero-3-phosphate + hexadecanoyl-CoA = 1-(9Z)-octadecenoyl-2-hexadecanoyl-sn-glycero-3-phosphate + CoA. The enzyme catalyses 1-(9Z-octadecenoyl)-sn-glycero-3-phosphate + octadecanoyl-CoA = 1-(9Z-octadecenoyl)-2-octadecanoyl-sn-glycero-3-phosphate + CoA. It carries out the reaction 1-(9Z-octadecenoyl)-sn-glycero-3-phosphate + (5Z,8Z,11Z,14Z)-eicosatetraenoyl-CoA = 1-(9Z)-octadecenoyl-2-(5Z,8Z,11Z,14Z)-eicosatetraenoyl-sn-glycero-3-phosphate + CoA. The catalysed reaction is eicosanoyl-CoA + 1-(9Z-octadecenoyl)-sn-glycero-3-phosphate = 1-(9Z)-octadecenoyl-2-eicosanoyl-sn-glycero-3-phosphate + CoA. It catalyses the reaction 1-hexadecanoyl-sn-glycero-3-phosphate + (9Z)-octadecenoyl-CoA = 1-hexadecanoyl-2-(9Z-octadecenoyl)-sn-glycero-3-phosphate + CoA. The enzyme catalyses 1-octadecanoyl-sn-glycero-3-phosphate + (9Z)-octadecenoyl-CoA = 1-octadecanoyl-2-(9Z-octadecenoyl)-sn-glycero-3-phosphate + CoA. It carries out the reaction 1-(5Z,8Z,11Z,14Z-eicosatetraenoyl)-sn-glycero-3-phosphate + (9Z)-octadecenoyl-CoA = 1-(5Z,8Z,11Z,14Z)-eicosatetraenoyl-2-(9Z)-octadecenoyl-sn-glycero-3-phosphate + CoA. Its activity is regulated as follows. Acyltransferase activity is inhibited by detergents such as Triton X-100 and 3-[(3-cholamidopropyl)dimethylammonio]-1-propanesulfonate (CHAPS). Acyltransferase activity is inhibited by the presence of magnesium and calcium. Functionally, coenzyme A-dependent lysophosphatidic acid acyltransferase that catalyzes the transfer of an acyl group on a lysophosphatidic acid. Functions preferentially with 1-oleoyl-lysophosphatidic acid followed by 1-palmitoyl-lysophosphatidic acid, 1-stearoyl-lysophosphatidic acid and 1-arachidonoyl-lysophosphatidic acid as lipid acceptor. Functions preferentially with arachidonoyl-CoA followed by oleoyl-CoA as acyl group donors. Functions in phosphatidic acid biosynthesis. May regulate the cellular storage of triacylglycerol through activation of the phospholipase PNPLA2. Involved in keratinocyte differentiation. Regulates lipid droplet fusion. This is 1-acylglycerol-3-phosphate O-acyltransferase ABHD5 from Mus musculus (Mouse).